We begin with the raw amino-acid sequence, 482 residues long: Keratin, type I cytoskeletal 39 (482 aa).

The disordered stretch occupies residues M1–N24. The head stretch occupies residues M1 to E91. The IF rod domain maps to E91 to L402. The interval K92–A126 is coil 1A. Positions C127–D137 are linker 1. A coil 1B region spans residues Y138–C238. Residues Q239–V254 form a linker 12 region. The coil 2 stretch occupies residues D255–L398. Positions D399–V482 are tail.

Belongs to the intermediate filament family. As to quaternary structure, heterotetramer of two type I and two type II keratins.

May play a role in late hair differentiation. The chain is Keratin, type I cytoskeletal 39 (Krt39) from Mus musculus (Mouse).